A 3616-amino-acid polypeptide reads, in one-letter code: Replicase polyprotein 1ab (3616 aa).

A C4-type; atypical zinc finger spans residues Cys-8 to Cys-28. In terms of domain architecture, Peptidase C31 spans Glu-69–Arg-181. Catalysis depends on for Nsp1-alpha papain-like cysteine proteinase activity residues Cys-76 and His-147. The region spanning Asn-262–Gly-381 is the Peptidase C32 domain. Residues Cys-269 and His-340 each act as for Nsp1-beta papain-like cysteine proteinase activity in the active site. In terms of domain architecture, Peptidase C33 spans Gly-381–Phe-486. Residues Cys-390 and His-456 each act as for Nsp2 cysteine proteinase activity in the active site. Disordered stretches follow at residues Ser-672–Pro-706 and Pro-883–Arg-912. Over residues Lys-676–Thr-690 the composition is skewed to basic residues. Positions Asp-903 to Arg-912 are enriched in polar residues. Transmembrane regions (helical) follow at residues Trp-942–Leu-962, Leu-977–Leu-997, Leu-1010–Glu-1030, His-1060–Pro-1080, Phe-1085–Leu-1105, Val-1289–Leu-1309, Ala-1364–Val-1384, Val-1386–Phe-1406, and Val-1425–Ile-1445. Positions Cys-981–Leu-1105 are HD1. Residues Val-1289–Trp-1448 form an HD2 region. A Peptidase S32 domain is found at Gly-1513–Glu-1714. Active-site charge relay system; for 3C-like serine proteinase activity residues include His-1551, Asp-1576, and Ser-1628. Helical transmembrane passes span Gly-1715–Val-1735, Phe-1737–Ala-1757, Phe-1761–Leu-1781, and Ser-1832–Phe-1852. The HD3 stretch occupies residues Phe-1737–Phe-1852. In terms of domain architecture, NiRAN spans Ser-2194 to Gly-2352. In terms of domain architecture, RdRp catalytic spans Gly-2590 to Tyr-2724. The region spanning Lys-2844 to Leu-2907 is the AV ZBD domain. Zn(2+) is bound by residues Cys-2850, Cys-2853, Cys-2863, Cys-2868, His-2871, His-2873, His-2875, His-2877, Cys-2884, His-2886, Cys-2893, and Cys-2896. Positions Gln-2964–Leu-3116 constitute a (+)RNA virus helicase ATP-binding domain. Gly-2992 to Thr-2999 serves as a coordination point for ATP. In terms of domain architecture, (+)RNA virus helicase C-terminal spans Ile-3117–Gly-3248. One can recognise an AV-Nsp11N/CoV-Nsp15M domain in the interval Glu-3272 to Val-3368. The NendoU domain maps to Leu-3370 to Phe-3492.

Belongs to the arteriviridae polyprotein family. Specific enzymatic cleavages in vivo by its own proteases yield mature proteins. There are two alternative pathways for processing. Either nsp4-5 is cleaved, which represents the major pathway or the nsp5-6 and nsp6-7 are processed, which represents the minor pathway. The major pathway occurs when nsp2 acts as a cofactor for nsp4.

Its subcellular location is the host membrane. It is found in the host cytoplasm. It localises to the host perinuclear region. The catalysed reaction is RNA(n) + a ribonucleoside 5'-triphosphate = RNA(n+1) + diphosphate. It catalyses the reaction ATP + H2O = ADP + phosphate + H(+). The enzyme catalyses uridylyl-uridylyl-ribonucleotide-RNA = a 3'-end uridylyl-2',3'-cyclophospho-uridine-RNA + a 5'-end dephospho-ribonucleoside-RNA. In terms of biological role, the replicase polyprotein 1ab is a multifunctional protein: it contains the activities necessary for the transcription of negative stranded RNA, leader RNA, subgenomic mRNAs and progeny virion RNA as well as proteinases responsible for the cleavage of the polyprotein into functional products. Functionally, the Nsp1 chain is essential for viral subgenomic mRNA synthesis. The 3C-like serine proteinase chain is responsible for the majority of cleavages as it cleaves the C-terminus of the polyprotein. Its function is as follows. The helicase chain, which contains a zinc finger structure, displays RNA and DNA duplex-unwinding activities with 5' to 3' polarity. In terms of biological role, plays a role in viral transcription/replication and prevents the simultaneous activation of host cell dsRNA sensors, such as MDA5/IFIH1, OAS, and PKR. Acts by degrading the 5'-polyuridines generated during replication of the poly(A) region of viral genomic and subgenomic RNAs. Catalyzes a two-step reaction in which a 2'3'-cyclic phosphate (2'3'-cP) is first generated by 2'-O transesterification, which is then hydrolyzed to a 3'-phosphate (3'-P). If not degraded, poly(U) RNA would hybridize with poly(A) RNA tails and activate host dsRNA sensors. This is Replicase polyprotein 1ab (rep) from Mus musculus domesticus (western European house mouse).